The following is a 219-amino-acid chain: Ras-related protein Rab-3B (219 aa).

Ala-2 carries the N-acetylalanine modification. The GTP site is built by Ser-31, Ser-32, Val-33, Gly-34, Lys-35, Thr-36, Ser-37, Pro-49, and Ser-53. Mg(2+) is bound at residue Thr-36. Residues 45–58 carry the Switch 1 motif; sequence DTFTPAFVSTVGID. Mg(2+)-binding residues include Thr-54 and Asp-77. The short motif at 78–96 is the Switch 2 element; it reads TAGQERYRTITTAYYRGAM. Gly-80 is a binding site for GTP. Thr-86 is modified (phosphothreonine). GTP-binding residues include Asn-135, Lys-136, Asp-138, Ala-166, and Lys-167. Ser-188 is modified (phosphoserine). S-geranylgeranyl cysteine attachment occurs at residues Cys-217 and Cys-219. The residue at position 219 (Cys-219) is a Cysteine methyl ester.

The protein belongs to the small GTPase superfamily. Rab family. Interacts with RIMS1, RIMS2, RPH3A and RPH3AL. The GTP-bound form interacts with GAS8/DRC4 (via coiled-coil domains). Interacts with GDI2, CHM and CHML; phosphorylation at Thr-86 disrupts these interactions. Interacts with MADD (via uDENN domain); the GTP-bound form is preferred for interaction. It depends on Mg(2+) as a cofactor. Post-translationally, phosphorylation of Thr-86 in the switch II region by LRRK2 prevents the association of RAB regulatory proteins, including CHM, CHML and RAB GDP dissociation inhibitor GDI2.

The protein localises to the cell membrane. It localises to the golgi apparatus. The enzyme catalyses GTP + H2O = GDP + phosphate + H(+). With respect to regulation, regulated by guanine nucleotide exchange factors (GEFs) which promote the exchange of bound GDP for free GTP. Regulated by GTPase activating proteins (GAPs) which increase the GTP hydrolysis activity. Inhibited by GDP dissociation inhibitors (GDIs) which prevent Rab-GDP dissociation. Functionally, the small GTPases Rab are key regulators of intracellular membrane trafficking, from the formation of transport vesicles to their fusion with membranes. Rabs cycle between an inactive GDP-bound form and an active GTP-bound form that is able to recruit to membranes different sets of downstream effectors directly responsible for vesicle formation, movement, tethering and fusion. This chain is Ras-related protein Rab-3B (RAB3B), found in Bos taurus (Bovine).